Consider the following 367-residue polypeptide: Zinc finger CCCH domain-containing protein 56 (367 aa).

A disordered region spans residues 38–80; the sequence is YNSQWNADGGGGGSSRAGSEQPPPGKKSRGGGGGEGGGNTSKS. Positions 67–76 are enriched in gly residues; that stretch reads GGGGGEGGGN. C3H1-type zinc fingers lie at residues 87 to 114, 169 to 197, and 245 to 273; these read FFKT…HGME, AYKG…HDEQ, and NWKT…HGAA.

The protein is Zinc finger CCCH domain-containing protein 56 of Oryza sativa subsp. japonica (Rice).